A 311-amino-acid polypeptide reads, in one-letter code: Aspartate carbamoyltransferase catalytic subunit (311 aa).

Carbamoyl phosphate contacts are provided by Arg55 and Thr56. Lys85 provides a ligand contact to L-aspartate. Carbamoyl phosphate is bound by residues Arg106, His135, and Gln138. L-aspartate contacts are provided by Arg168 and Arg230. Residues Leu268 and Pro269 each contribute to the carbamoyl phosphate site.

Belongs to the aspartate/ornithine carbamoyltransferase superfamily. ATCase family. In terms of assembly, heterododecamer (2C3:3R2) of six catalytic PyrB chains organized as two trimers (C3), and six regulatory PyrI chains organized as three dimers (R2).

The catalysed reaction is carbamoyl phosphate + L-aspartate = N-carbamoyl-L-aspartate + phosphate + H(+). The protein operates within pyrimidine metabolism; UMP biosynthesis via de novo pathway; (S)-dihydroorotate from bicarbonate: step 2/3. Catalyzes the condensation of carbamoyl phosphate and aspartate to form carbamoyl aspartate and inorganic phosphate, the committed step in the de novo pyrimidine nucleotide biosynthesis pathway. This chain is Aspartate carbamoyltransferase catalytic subunit, found in Klebsiella pneumoniae subsp. pneumoniae (strain ATCC 700721 / MGH 78578).